The primary structure comprises 256 residues: Small ribosomal subunit protein eS1A (256 aa).

At alanine 2 the chain carries N-acetylalanine; partial.

Belongs to the eukaryotic ribosomal protein eS1 family. Component of the small ribosomal subunit. Mature ribosomes consist of a small (40S) and a large (60S) subunit. The 40S subunit contains about 33 different proteins and 1 molecule of RNA (18S). The 60S subunit contains about 49 different proteins and 3 molecules of RNA (25S, 5.8S and 5S).

It localises to the cytoplasm. The chain is Small ribosomal subunit protein eS1A from Clavispora lusitaniae (strain ATCC 42720) (Yeast).